We begin with the raw amino-acid sequence, 557 residues long: Elongator complex protein 3 (557 aa).

Residues 91–381 (RTASGIAVVA…YRVQRDIPMP (291 aa)) enclose the Radical SAM core domain. Residues Cys108, Cys118, and Cys121 each contribute to the [4Fe-4S] cluster site. Acetyl-CoA is bound at residue Lys173. The N-acetyltransferase domain maps to 405–557 (TTCRDVRTRE…LDGPYMSKRI (153 aa)). Residue Lys453 forms a Glycyl lysine isopeptide (Lys-Gly) (interchain with G-Cter in ubiquitin) linkage. Acetyl-CoA-binding positions include 485–488 (ELHV), 508–510 (FGT), and Tyr541.

It belongs to the ELP3 family. As to quaternary structure, component of the elongator complex which consists of ELP1/IKI3, ELP2, ELP3, ELP4, ELP5/IKI1 and ELP6. The elongator complex is composed of two copies of the Elp123 subcomplex (composed of ELP1/IKI3, ELP2 and ELP3) and two copies of the Elp456 subcomplex (composed of ELP4, ELP5/IKI1 and ELP6). The Elp123 subcomplex forms a two-lobed scaffold, which binds the Elp456 subcomplex asymmetrically. In each lobe, ELP2 is tightly sandwiched between ELP1/IKI3 and ELP3. The Elp123 subcomplex binds tRNA through ELP1/IKI3 and ELP3 and can bind 2 tRNAs simultaneously. tRNA-binding induces conformational rearrangements which precisely position the targeted anticodon base in the active site. ELP3 interacts with KTI11/DPH3. ELP3 interacts with KTI12. The Elp456 subcomplex binds tRNA and has ATPase activity. It depends on [4Fe-4S] cluster as a cofactor.

The protein localises to the cytoplasm. It is found in the nucleus. It catalyses the reaction uridine(34) in tRNA + acetyl-CoA + S-adenosyl-L-methionine + H2O = 5-(carboxymethyl)uridine(34) in tRNA + 5'-deoxyadenosine + L-methionine + CoA + 2 H(+). The protein operates within tRNA modification; 5-methoxycarbonylmethyl-2-thiouridine-tRNA biosynthesis. Catalytic tRNA acetyltransferase subunit of the elongator complex which is required for multiple tRNA modifications, including mcm5U (5-methoxycarbonylmethyl uridine), mcm5s2U (5-methoxycarbonylmethyl-2-thiouridine), and ncm5U (5-carbamoylmethyl uridine). In the elongator complex, acts as a tRNA uridine(34) acetyltransferase, which mediates formation of carboxymethyluridine in the wobble base at position 34 in tRNAs. The complex functions as a gamma-toxin target (TOT); disruption of the complex confers resistance to Kluyveromyces lactis toxin zymocin (pGKL1 killer toxin). May also be involved in sensitivity to Pichia inositovora toxin. Independently, ELP3 may be involved in polarized exocytosis. The protein is Elongator complex protein 3 of Saccharomyces cerevisiae (strain ATCC 204508 / S288c) (Baker's yeast).